Reading from the N-terminus, the 340-residue chain is DNA-directed RNA polymerase subunit alpha (340 aa).

The segment at Met1 to Asp238 is alpha N-terminal domain (alpha-NTD). Residues Ala253–Ala340 form an alpha C-terminal domain (alpha-CTD) region.

Belongs to the RNA polymerase alpha chain family. As to quaternary structure, homodimer. The RNAP catalytic core consists of 2 alpha, 1 beta, 1 beta' and 1 omega subunit. When a sigma factor is associated with the core the holoenzyme is formed, which can initiate transcription.

The enzyme catalyses RNA(n) + a ribonucleoside 5'-triphosphate = RNA(n+1) + diphosphate. Functionally, DNA-dependent RNA polymerase catalyzes the transcription of DNA into RNA using the four ribonucleoside triphosphates as substrates. The chain is DNA-directed RNA polymerase subunit alpha from Myxococcus xanthus (strain DK1622).